A 606-amino-acid chain; its full sequence is NADH-ubiquinone oxidoreductase chain 5 (606 aa).

16 consecutive transmembrane segments (helical) span residues 1-21, 43-63, 87-107, 112-132, 137-157, 171-191, 213-233, 241-261, 273-293, 301-321, 324-344, 366-386, 407-429, 457-477, 482-502, and 582-602; these read MNPF…PIMM, AFTL…EMII, VMFI…SMWY, PFIN…MILV, LFQL…LIGW, AILY…WFLT, LIGL…HPWL, TPVS…FLLI, VQTM…LCAI, IVAF…GINQ, LAFL…MCSG, MPFT…MPYL, WALL…IIFF, LLIG…PMTV, MPLY…MLAL, and GLIK…MTLF.

It belongs to the complex I subunit 5 family. Core subunit of respiratory chain NADH dehydrogenase (Complex I) which is composed of 45 different subunits.

The protein localises to the mitochondrion inner membrane. The catalysed reaction is a ubiquinone + NADH + 5 H(+)(in) = a ubiquinol + NAD(+) + 4 H(+)(out). In terms of biological role, core subunit of the mitochondrial membrane respiratory chain NADH dehydrogenase (Complex I) which catalyzes electron transfer from NADH through the respiratory chain, using ubiquinone as an electron acceptor. Essential for the catalytic activity and assembly of complex I. This Sus scrofa (Pig) protein is NADH-ubiquinone oxidoreductase chain 5 (MT-ND5).